The sequence spans 186 residues: Calcium load-activated calcium channel homolog (186 aa).

The Cytoplasmic segment spans residues 1–6; sequence MLGDCL. A helical transmembrane segment spans residues 7–27; sequence LIIAIAFGTALAGEGITWLLV. Over 28 to 87 the chain is Lumenal; that stretch reads YRSDHYKRLKADMDKKTKKLEKKKQEVGDTNDKNIKRKLEREEERLKATNRDMSMFKMKS. A coiled-coil region spans residues 30-86; sequence SDHYKRLKADMDKKTKKLEKKKQEVGDTNDKNIKRKLEREEERLKATNRDMSMFKMK. The chain crosses the membrane as a helical span at residues 88–108; the sequence is MFAIGLAFTALLSTFNSIFEG. The Cytoplasmic portion of the chain corresponds to 109–134; that stretch reads RVVAKLPFYPIGFIQGLSHRNLIGED. The pore-forming intramembrane region spans 135-151; sequence MTDCSFIFLYILCTMTV. Residues 152–186 are Cytoplasmic-facing; it reads RQNLQKILGFAPSRAMARQQSSPWAPPNSQMNYLR.

This sequence belongs to the TMCO1 family. In terms of assembly, homodimer and homotetramer.

Its subcellular location is the endoplasmic reticulum membrane. In terms of biological role, calcium-selective channel required to prevent calcium stores from overfilling. In Caenorhabditis elegans, this protein is Calcium load-activated calcium channel homolog.